The sequence spans 623 residues: Glutathione import ATP-binding protein GsiA (623 aa).

ABC transporter domains are found at residues 15–269 (VENL…RALL) and 314–564 (LRVR…RKLL). ATP is bound by residues 49-56 (GESGSGKS) and 357-364 (GESGSGKS).

The protein belongs to the ABC transporter superfamily. Glutathione importer (TC 3.A.1.5.11) family. The complex is composed of two ATP-binding proteins (GsiA), two transmembrane proteins (GsiC and GsiD) and a solute-binding protein (GsiB).

The protein localises to the cell inner membrane. The catalysed reaction is glutathione(out) + ATP + H2O = glutathione(in) + ADP + phosphate + H(+). Its function is as follows. Part of the ABC transporter complex GsiABCD involved in glutathione import. Responsible for energy coupling to the transport system. The polypeptide is Glutathione import ATP-binding protein GsiA (Escherichia coli O1:K1 / APEC).